A 218-amino-acid chain; its full sequence is Cytochrome b6 (218 aa).

A helical membrane pass occupies residues Ile35 to Phe55. A heme c-binding site is contributed by Cys38. Heme b contacts are provided by His89 and His103. Helical transmembrane passes span Ala93–Phe113, Leu119–Tyr139, and Leu189–Ile209. Residues His190 and His205 each contribute to the heme b site.

It belongs to the cytochrome b family. PetB subfamily. In terms of assembly, the 4 large subunits of the cytochrome b6-f complex are cytochrome b6, subunit IV (17 kDa polypeptide, PetD), cytochrome f and the Rieske protein, while the 4 small subunits are PetG, PetL, PetM and PetN. The complex functions as a dimer. Heme b is required as a cofactor. It depends on heme c as a cofactor.

The protein localises to the cellular thylakoid membrane. In terms of biological role, component of the cytochrome b6-f complex, which mediates electron transfer between photosystem II (PSII) and photosystem I (PSI), cyclic electron flow around PSI, and state transitions. The chain is Cytochrome b6 from Synechococcus sp. (strain CC9605).